The primary structure comprises 187 residues: Elongation factor P (187 aa).

The protein belongs to the elongation factor P family.

Its subcellular location is the cytoplasm. It functions in the pathway protein biosynthesis; polypeptide chain elongation. In terms of biological role, involved in peptide bond synthesis. Stimulates efficient translation and peptide-bond synthesis on native or reconstituted 70S ribosomes in vitro. Probably functions indirectly by altering the affinity of the ribosome for aminoacyl-tRNA, thus increasing their reactivity as acceptors for peptidyl transferase. This is Elongation factor P from Desulfotalea psychrophila (strain LSv54 / DSM 12343).